The following is a 5628-amino-acid chain: Polyketide synthase ThaG (5628 aa).

A Ketosynthase family 3 (KS3) 1 domain is found at 13–448 (HDDIAVIGIA…GTNAHVVLRE (436 aa)). Active-site for beta-ketoacyl synthase 1 activity residues include Cys184, His319, and His361. 2 disordered regions span residues 552 to 613 (GNLV…DGPT) and 1156 to 1183 (ASPGAASSGAAAPNAASDASRDTERAEA). Residues 559 to 589 (GPHDEQADHDGSGEHGEHGERARAGADDLSR) are compositionally biased toward basic and acidic residues. Low complexity predominate over residues 1156 to 1173 (ASPGAASSGAAAPNAASD). The span at 1174–1183 (ASRDTERAEA) shows a compositional bias: basic and acidic residues. Positions 1209 to 1286 (AHGSARLPAL…RLAGHLATRL (78 aa)) constitute a Carrier 1 domain. Residue Ser1246 is modified to O-(pantetheine 4'-phosphoryl)serine. Residues 1373–1781 (YEPIAIVGMS…GTNAHVIVEA (409 aa)) form the Ketosynthase family 3 (KS3) 2 domain. Residues Cys1529, His1664, and His1704 each act as for beta-ketoacyl synthase 2 activity in the active site. The N-terminal hotdog fold 1 stretch occupies residues 1967-2099 (AREPGARERA…GVVDELNEPA (133 aa)). A PKS/mFAS DH 1 domain is found at 1967–2261 (AREPGARERA…SARWRKLAGA (295 aa)). Catalysis depends on His1999, which acts as the Proton acceptor; for dehydratase activity 1. The interval 2113 to 2261 (AGERVDGAAL…SARWRKLAGA (149 aa)) is C-terminal hotdog fold 1. Asp2175 (proton donor; for dehydratase activity 1) is an active-site residue. Positions 2426–2446 (DADEDDRDGREPAGGPPLRDD) are disordered. The region spanning 2702 to 2780 (PAARVDLHAL…AIARALDASA (79 aa)) is the Carrier 2 domain. Residues 2817–2836 (TPPDAGAPQRGAHAAAAEGS) form a disordered region. The segment covering 2822–2835 (GAPQRGAHAAAAEG) has biased composition (low complexity). In terms of domain architecture, Carrier 3 spans 2862 to 2935 (ARVGARLSAL…ELTDYFVRRH (74 aa)). O-(pantetheine 4'-phosphoryl)serine is present on Ser2896. Residues 3005–3430 (ADAIAVIGLA…GANAHVIVRE (426 aa)) form the Ketosynthase family 3 (KS3) 3 domain. Catalysis depends on for beta-ketoacyl synthase 3 activity residues Cys3175, His3310, and His3351. Residues 3526–3546 (PGKKQLRGNGRARRGDAPPAG) form a disordered region. The interval 3621-3743 (HPMLDANRSE…GRSPSRAARG (123 aa)) is N-terminal hotdog fold 2. Positions 3621-3895 (HPMLDANRSE…SRAAASWRTA (275 aa)) constitute a PKS/mFAS DH 2 domain. The Proton acceptor; for dehydratase activity 2 role is filled by His3650. The C-terminal hotdog fold 2 stretch occupies residues 3758–3895 (RAAPAFDADA…SRAAASWRTA (138 aa)). Asp3818 (proton donor; for dehydratase activity 2) is an active-site residue. Residues 3917-3942 (PAAESPSAATSTSAATSPAISTSAAT) form a disordered region. The 75-residue stretch at 4840–4914 (TRTAALLRSL…ALAAYVGSQL (75 aa)) folds into the Carrier 4 domain. The residue at position 4874 (Ser4874) is an O-(pantetheine 4'-phosphoryl)serine. The segment at 4960–4992 (APRARTGADAPDTSLASSASSISSARASSPASP) is disordered. One can recognise a Ketosynthase family 3 (KS3) 4 domain in the interval 4998-5424 (SFDVAIVGAS…GVNAHVVLEE (427 aa)). Residues Cys5158, His5293, and His5339 each act as for beta-ketoacyl synthase 4 activity in the active site. In terms of domain architecture, Carrier 5 spans 5470 to 5544 (ARIEAVIRDA…ALRDHVAERI (75 aa)). Ser5504 is subject to O-(pantetheine 4'-phosphoryl)serine. Positions 5573-5603 (VSEATEASDASEASDASEASEASEASEASKA) are disordered.

Requires pantetheine 4'-phosphate as cofactor.

It is found in the cytoplasm. The protein operates within antibiotic biosynthesis. Involved in production of the polyketide antibiotic thailandamide. In Burkholderia thailandensis (strain ATCC 700388 / DSM 13276 / CCUG 48851 / CIP 106301 / E264), this protein is Polyketide synthase ThaG.